Reading from the N-terminus, the 295-residue chain is ATP synthase gamma chain (295 aa).

The protein belongs to the ATPase gamma chain family. As to quaternary structure, F-type ATPases have 2 components, CF(1) - the catalytic core - and CF(0) - the membrane proton channel. CF(1) has five subunits: alpha(3), beta(3), gamma(1), delta(1), epsilon(1). CF(0) has three main subunits: a, b and c.

Its subcellular location is the cell inner membrane. In terms of biological role, produces ATP from ADP in the presence of a proton gradient across the membrane. The gamma chain is believed to be important in regulating ATPase activity and the flow of protons through the CF(0) complex. In Campylobacter fetus subsp. fetus (strain 82-40), this protein is ATP synthase gamma chain.